Reading from the N-terminus, the 1220-residue chain is Plasma membrane calcium-transporting ATPase 1 (1220 aa).

G2 carries the N-acetylglycine modification. Residues 2–105 are Cytoplasmic-facing; sequence GDMANNSVVY…KTFLQLVWEA (104 aa). A phosphoserine mark is found at S8 and S17. A helical transmembrane segment spans residues 106-126; the sequence is LQDVTLIILEIAAIVSLGLSF. The Extracellular portion of the chain corresponds to 127 to 154; it reads YQPPEGDNALCGEVSVGEEEGEGETGWI. A helical membrane pass occupies residues 155–175; sequence EGAAILLSVVCVVLVTAFNDW. Topologically, residues 176–366 are cytoplasmic; sequence SKEKQFRGLQ…KEKSVLQGKL (191 aa). The tract at residues 297-356 is disordered; sequence EEEKKDEKKKEKKNKKQDGAIENRNKAKAQDGEPMEMQPLKSEEGGDGDEKDKKKANLPK. 2 stretches are compositionally biased toward basic and acidic residues: residues 312 to 327 and 337 to 356; these read KQDGAIENRNKAKAQD and KSEEGGDGDEKDKKKANLPK. Phosphoserine is present on S338. A helical membrane pass occupies residues 367-386; it reads TKLAVQIGKAGLLMSAITVI. Over 387-418 the chain is Extracellular; it reads ILVLYFLIDTFWVQKRPWLAECTPIYIQYFVK. A helical transmembrane segment spans residues 419–439; it reads FFIIGVTVLVVAVPEGLPLPV. Topologically, residues 440–855 are cytoplasmic; that stretch reads TISLAYSVNE…RNVYDSISKF (416 aa). The 4-aspartylphosphate intermediate role is filled by D475. Mg(2+) contacts are provided by D475, T477, and D797. The chain crosses the membrane as a helical span at residues 856 to 876; it reads LQFQLTVNVVAVIVAFTGACI. Residues 877–882 lie on the Extracellular side of the membrane; it reads TQDSPL. The helical transmembrane segment at 883 to 903 threads the bilayer; the sequence is KAVQMLWVNLIMDTLASLALA. Over 904-927 the chain is Cytoplasmic; that stretch reads TEPPTESLLLGKPYGRNKPLISRT. The chain crosses the membrane as a helical span at residues 928–948; that stretch reads MMKNILGHAFYQLVVVFTLLL. Over 949–971 the chain is Extracellular; the sequence is AGEKFFDIDSGRNAPLHAPPSEH. A helical membrane pass occupies residues 972–991; it reads YTIVFNIFVLMQLFNEINAR. Residues 992–1005 are Cytoplasmic-facing; it reads KIHGERNVFEGIFN. The chain crosses the membrane as a helical span at residues 1006-1027; the sequence is NAIFCTIVLGTFVVQIIIVQFA. Residues 1028–1039 are Extracellular-facing; that stretch reads GKPFSCSELSVE. A helical transmembrane segment spans residues 1040 to 1060; that stretch reads QWLWSIFLGMGTLLWGQLIST. The Cytoplasmic portion of the chain corresponds to 1061 to 1220; the sequence is IPTSRLKFQK…SPLHSLETSL (160 aa). Residues 1100-1117 are calmodulin-binding subdomain A; that stretch reads LRRWQILWFRGLNRIQTQ. The residue at position 1116 (T1116) is a Phosphothreonine; by PKC. The interval 1118–1220 is required for basolateral membrane targeting; that stretch reads IRVVNAFRSS…SPLHSLETSL (103 aa). Phosphoserine is present on residues S1140 and S1155. The disordered stretch occupies residues 1160–1220; that stretch reads PLIDDTDAED…SPLHSLETSL (61 aa). T1165 is modified (phosphothreonine). S1177 carries the post-translational modification Phosphoserine; by PKA. Phosphoserine is present on residues S1178 and S1182. Residues 1200–1220 show a composition bias toward polar residues; sequence MNKSATSSSPGSPLHSLETSL.

This sequence belongs to the cation transport ATPase (P-type) (TC 3.A.3) family. Type IIB subfamily. As to quaternary structure, monomer. Dimer. Oligomer. Calmodulin binding. Interacts with PDZD11. Interacts with SLC35G1 and STIM1. Interacts with YWHAE; interacts with the monomeric and dimeric forms of the YWHAE but prefer the monomer form; this interaction inhibits calcium-transporting ATPase activity. Interacts with NPTN; this interaction stabilizes ATP2B1 and increases ATPase activity; this interaction controls T cell calcium homeostasis following T cell activation. Interacts with EPB41; regulates small intestinal calcium absorption through regulation of membrane expression of ATP2B1. As to expression, isoform B is ubiquitously expressed and is the most predominant isoform. Isoform C is expressed at much lower levels in all tissues tested, but liver, while isoform A is found only in aorta, brain and stomach.

It is found in the cell membrane. The protein localises to the basolateral cell membrane. Its subcellular location is the synapse. It localises to the presynaptic cell membrane. The protein resides in the cytoplasmic vesicle. It is found in the secretory vesicle. The protein localises to the synaptic vesicle membrane. It catalyses the reaction Ca(2+)(in) + ATP + H2O = Ca(2+)(out) + ADP + phosphate + H(+). Functionally, catalyzes the hydrolysis of ATP coupled with the transport of calcium from the cytoplasm to the extracellular space thereby maintaining intracellular calcium homeostasis. Plays a role in blood pressure regulation through regulation of intracellular calcium concentration and nitric oxide production leading to regulation of vascular smooth muscle cells vasoconstriction. Positively regulates bone mineralization through absorption of calcium from the intestine. Plays dual roles in osteoclast differentiation and survival by regulating RANKL-induced calcium oscillations in preosteoclasts and mediating calcium extrusion in mature osteoclasts. Regulates insulin sensitivity through calcium/calmodulin signaling pathway by regulating AKT1 activation and NOS3 activation in endothelial cells. May play a role in synaptic transmission by modulating calcium and proton dynamics at the synaptic vesicles. This chain is Plasma membrane calcium-transporting ATPase 1, found in Oryctolagus cuniculus (Rabbit).